The following is a 281-amino-acid chain: Nucleoid occlusion protein (281 aa).

Residues 145–164 (EALAQRLGKGQSTIANKLRL) constitute a DNA-binding region (H-T-H motif).

Belongs to the ParB family.

Its subcellular location is the cytoplasm. The protein resides in the nucleoid. In terms of biological role, effects nucleoid occlusion by binding relatively nonspecifically to DNA and preventing the assembly of the division machinery in the vicinity of the nucleoid, especially under conditions that disturb the cell cycle. It helps to coordinate cell division and chromosome segregation by preventing the formation of the Z ring through the nucleoid, which would cause chromosome breakage. This is Nucleoid occlusion protein from Geobacillus sp. (strain WCH70).